The sequence spans 541 residues: Protopine 6-monooxygenase (541 aa).

Residues 9–29 traverse the membrane as a helical segment; that stretch reads LLLNTWISAYSMAALLALVLV. Residue C476 coordinates heme.

It belongs to the cytochrome P450 family. It depends on heme as a cofactor.

The protein resides in the endoplasmic reticulum membrane. It catalyses the reaction protopine + reduced [NADPH--hemoprotein reductase] + O2 = 6-hydroxyprotopine + oxidized [NADPH--hemoprotein reductase] + H2O + H(+). It functions in the pathway alkaloid biosynthesis. Catalyzes the conversion of protopine and allocryptopine to dihydrosanguinarine and dihydrochelerythrine, respectively, in the biosynthesis of isoquinoline alkaloid sanguinarine. In Papaver somniferum (Opium poppy), this protein is Protopine 6-monooxygenase (CYP82N3).